Here is a 426-residue protein sequence, read N- to C-terminus: Mannose-1-phosphate guanyltransferase alpha-B (426 aa).

The protein belongs to the transferase hexapeptide repeat family.

The catalysed reaction is alpha-D-mannose 1-phosphate + GTP + H(+) = GDP-alpha-D-mannose + diphosphate. It participates in nucleotide-sugar biosynthesis; GDP-alpha-D-mannose biosynthesis; GDP-alpha-D-mannose from alpha-D-mannose 1-phosphate (GTP route): step 1/1. This chain is Mannose-1-phosphate guanyltransferase alpha-B (gmppa-b), found in Xenopus laevis (African clawed frog).